Consider the following 359-residue polypeptide: Chorismate synthase (359 aa).

An NADP(+)-binding site is contributed by Arg47. FMN-binding positions include 123–125 (RSS), Gly283, 298–302 (KPTSS), and Arg326.

This sequence belongs to the chorismate synthase family. As to quaternary structure, homotetramer. Requires FMNH2 as cofactor.

The catalysed reaction is 5-O-(1-carboxyvinyl)-3-phosphoshikimate = chorismate + phosphate. It participates in metabolic intermediate biosynthesis; chorismate biosynthesis; chorismate from D-erythrose 4-phosphate and phosphoenolpyruvate: step 7/7. Its function is as follows. Catalyzes the anti-1,4-elimination of the C-3 phosphate and the C-6 proR hydrogen from 5-enolpyruvylshikimate-3-phosphate (EPSP) to yield chorismate, which is the branch point compound that serves as the starting substrate for the three terminal pathways of aromatic amino acid biosynthesis. This reaction introduces a second double bond into the aromatic ring system. The chain is Chorismate synthase from Chlamydia caviae (strain ATCC VR-813 / DSM 19441 / 03DC25 / GPIC) (Chlamydophila caviae).